The chain runs to 879 residues: Phosphoenolpyruvate carboxylase (879 aa).

Active-site residues include His-138 and Lys-546.

Belongs to the PEPCase type 1 family. Requires Mg(2+) as cofactor.

The catalysed reaction is oxaloacetate + phosphate = phosphoenolpyruvate + hydrogencarbonate. Functionally, forms oxaloacetate, a four-carbon dicarboxylic acid source for the tricarboxylic acid cycle. The chain is Phosphoenolpyruvate carboxylase from Pectobacterium atrosepticum (strain SCRI 1043 / ATCC BAA-672) (Erwinia carotovora subsp. atroseptica).